Consider the following 508-residue polypeptide: Photosystem II CP47 reaction center protein (508 aa).

6 consecutive transmembrane segments (helical) span residues 21–36 (SVHIMHTALVAGWAGS), 101–115 (IVLSGLCFLAAIWHW), 140–156 (GIHLFLSGVACFGFGAF), 203–218 (IAAGTLGILAGLFHLS), 237–252 (VLSSSIAAVFFAAFVV), and 457–472 (SFALLFFFGHIWHGAR).

The protein belongs to the PsbB/PsbC family. PsbB subfamily. PSII is composed of 1 copy each of membrane proteins PsbA, PsbB, PsbC, PsbD, PsbE, PsbF, PsbH, PsbI, PsbJ, PsbK, PsbL, PsbM, PsbT, PsbX, PsbY, PsbZ, Psb30/Ycf12, at least 3 peripheral proteins of the oxygen-evolving complex and a large number of cofactors. It forms dimeric complexes. The cofactor is Binds multiple chlorophylls. PSII binds additional chlorophylls, carotenoids and specific lipids..

The protein localises to the plastid. The protein resides in the chloroplast thylakoid membrane. Its function is as follows. One of the components of the core complex of photosystem II (PSII). It binds chlorophyll and helps catalyze the primary light-induced photochemical processes of PSII. PSII is a light-driven water:plastoquinone oxidoreductase, using light energy to abstract electrons from H(2)O, generating O(2) and a proton gradient subsequently used for ATP formation. This Pelargonium hortorum (Common geranium) protein is Photosystem II CP47 reaction center protein.